The sequence spans 596 residues: Transcription factor COE3 (596 aa).

Residues 1 to 22 (MFGIQENIPRGGTTMKEEPLGS) form a disordered region. Residues 63–66 (RKSN) form an interaction with DNA region. Residues 151–170 (CRVLLTHEIMCSRCCDKKSC) form a C5-type zinc finger. Interaction with DNA stretches follow at residues 197 to 204 (NCLKNAGN) and 236 to 239 (NNSK). The IPT/TIG domain occupies 263-346 (PCIKAISPSE…KGAPGRFVYT (84 aa)). Residues 451 to 483 (TSQANDQVGYSRNTSSVSPRGYVPSSTPQQSNY) are disordered.

This sequence belongs to the COE family. Forms either a homodimer or a heterodimer with a related family member. Expressed in brain.

It is found in the nucleus. In terms of biological role, transcriptional activator. Recognizes variations of the palindromic sequence 5'-ATTCCCNNGGGAATT-3'. The protein is Transcription factor COE3 (EBF3) of Homo sapiens (Human).